Consider the following 160-residue polypeptide: SsrA-binding protein (160 aa).

The protein belongs to the SmpB family.

It is found in the cytoplasm. Functionally, required for rescue of stalled ribosomes mediated by trans-translation. Binds to transfer-messenger RNA (tmRNA), required for stable association of tmRNA with ribosomes. tmRNA and SmpB together mimic tRNA shape, replacing the anticodon stem-loop with SmpB. tmRNA is encoded by the ssrA gene; the 2 termini fold to resemble tRNA(Ala) and it encodes a 'tag peptide', a short internal open reading frame. During trans-translation Ala-aminoacylated tmRNA acts like a tRNA, entering the A-site of stalled ribosomes, displacing the stalled mRNA. The ribosome then switches to translate the ORF on the tmRNA; the nascent peptide is terminated with the 'tag peptide' encoded by the tmRNA and targeted for degradation. The ribosome is freed to recommence translation, which seems to be the essential function of trans-translation. The protein is SsrA-binding protein of Citrobacter koseri (strain ATCC BAA-895 / CDC 4225-83 / SGSC4696).